The following is a 199-amino-acid chain: Holliday junction branch migration complex subunit RuvA (199 aa).

The interval 1-65 is domain I; that stretch reads MIGWLHGQII…EDALLLYGFL (65 aa). The segment at 66 to 144 is domain II; the sequence is DKEERSLFRS…QFDGSVSDTF (79 aa). Residues 144–148 form a flexible linker region; it reads FQKQA. The tract at residues 149–199 is domain III; it reads GSTHSQQEAISALEALGYKPQEAWKVVNKIDNGNKSCEQLIREALQILSSR.

This sequence belongs to the RuvA family. Homotetramer. Forms an RuvA(8)-RuvB(12)-Holliday junction (HJ) complex. HJ DNA is sandwiched between 2 RuvA tetramers; dsDNA enters through RuvA and exits via RuvB. An RuvB hexamer assembles on each DNA strand where it exits the tetramer. Each RuvB hexamer is contacted by two RuvA subunits (via domain III) on 2 adjacent RuvB subunits; this complex drives branch migration. In the full resolvosome a probable DNA-RuvA(4)-RuvB(12)-RuvC(2) complex forms which resolves the HJ.

The protein resides in the cytoplasm. Its function is as follows. The RuvA-RuvB-RuvC complex processes Holliday junction (HJ) DNA during genetic recombination and DNA repair, while the RuvA-RuvB complex plays an important role in the rescue of blocked DNA replication forks via replication fork reversal (RFR). RuvA specifically binds to HJ cruciform DNA, conferring on it an open structure. The RuvB hexamer acts as an ATP-dependent pump, pulling dsDNA into and through the RuvAB complex. HJ branch migration allows RuvC to scan DNA until it finds its consensus sequence, where it cleaves and resolves the cruciform DNA. This is Holliday junction branch migration complex subunit RuvA from Legionella pneumophila (strain Paris).